A 582-amino-acid polypeptide reads, in one-letter code: Transcription factor PCF5 (582 aa).

2 disordered regions span residues 30–78 (AAGK…QHDH) and 123–195 (SPMG…GGGG). The span at 51–64 (GGDGGGVGGGGSGG) shows a compositional bias: gly residues. The TCP domain occupies 213 to 271 (RKDRHSKVCTARGPRDRRVRLSAHTAIQFYDVQDRLGYDRPSKAVDWLIKNAKDAIDKL). 3 disordered regions span residues 283-306 (GAGA…ENSD), 402-423 (MFHH…TTQQ), and 548-582 (RLPA…ASHH).

Forms homodimers and heterodimers with PCF2.

Its subcellular location is the nucleus. Its function is as follows. Transcription activator. Binds the promoter core sequence 5'-GGNCC-3'. The polypeptide is Transcription factor PCF5 (PCF5) (Oryza sativa subsp. indica (Rice)).